The sequence spans 475 residues: E3 ubiquitin-protein ligase TRIM21 (475 aa).

The segment at 16-55 (CPICLDPFVEPVSIECGHSFCQECISQVGKGGGSVCPVCR) adopts an RING-type zinc-finger fold. Zn(2+) is bound by residues C92, H95, C114, and H120. The B box-type zinc finger occupies 92 to 123 (CAVHGERLHLFCEKDGKALCWVCAQSRKHRDH). Residues 128–238 (LEEAAQEYQE…ISELDRRCHS (111 aa)) are a coiled coil. S266 bears the Phosphoserine mark. Residues 268–465 (ELRSVCHVPG…NTAPLTLCPL (198 aa)) enclose the B30.2/SPRY domain.

It belongs to the TRIM/RBCC family. Homotrimer. Interacts (via C-terminus) with IRF8 (via C-terminus). Component of a SCF(SKP2)-like complex containing CUL1, SKP1, TRIM21 and SKP2. Interacts with CALR, CUL1, FBXW11, HSPA5, IKBKB, IRF3, SKP1 and VCP. Interacts with SKP2; the interaction with SKP2 does not depend on an intact F-box domain. Interacts (via N-terminus and C-terminus) with DCP2 (via N-terminus and C-terminus). Interacts with ULK1, BECN1 and with ATG8 family members, including GABARAP, GABARAPL1, GABARAPL2 and MAP1LC3C/LC3C. Interacts with TRIM21 and SQSTM1/sequestosome 1. Interacts with IRF3. Interacts (via the SPRY domain) with NMI (via coiled-coil domain); the interaction promotes 'Lys-63'-linked ubiquitination of NMI. Interacts with IFI35 and NMI; the interaction facilitates NMI-IFI35 complex formation. In terms of assembly, (Microbial infection) Interacts (via B30.2/SPRY domain) with severe fever with thrombocytopenia syndrome virus (SFTSV) NSs; this interaction activates NFE2L2-mediated transcriptional activation of antioxidant genes. Post-translationally, autoubiquitinated; does not lead to its proteasomal degradation. Deubiquitinated by USP4; leading to its stabilization. Isoform 1 and isoform 2 are expressed in fetal and adult heart and fetal lung.

It is found in the cytoplasm. The protein localises to the cytoplasmic vesicle. It localises to the autophagosome. The protein resides in the nucleus. Its subcellular location is the P-body. It is found in the stress granule. It catalyses the reaction S-ubiquitinyl-[E2 ubiquitin-conjugating enzyme]-L-cysteine + [acceptor protein]-L-lysine = [E2 ubiquitin-conjugating enzyme]-L-cysteine + N(6)-ubiquitinyl-[acceptor protein]-L-lysine.. Its pathway is protein modification; protein ubiquitination. Functionally, E3 ubiquitin-protein ligase whose activity is dependent on E2 enzymes, UBE2D1, UBE2D2, UBE2E1 and UBE2E2. Forms a ubiquitin ligase complex in cooperation with the E2 UBE2D2 that is used not only for the ubiquitination of USP4 and IKBKB but also for its self-ubiquitination. Component of cullin-RING-based SCF (SKP1-CUL1-F-box protein) E3 ubiquitin-protein ligase complexes such as SCF(SKP2)-like complexes. A TRIM21-containing SCF(SKP2)-like complex is shown to mediate ubiquitination of CDKN1B ('Thr-187' phosphorylated-form), thereby promoting its degradation by the proteasome. Monoubiquitinates IKBKB that will negatively regulates Tax-induced NF-kappa-B signaling. Negatively regulates IFN-beta production post-pathogen recognition by catalyzing polyubiquitin-mediated degradation of IRF3. Mediates the ubiquitin-mediated proteasomal degradation of IgG1 heavy chain, which is linked to the VCP-mediated ER-associated degradation (ERAD) pathway. Promotes IRF8 ubiquitination, which enhanced the ability of IRF8 to stimulate cytokine genes transcription in macrophages. Plays a role in the regulation of the cell cycle progression. Enhances the decapping activity of DCP2. Exists as a ribonucleoprotein particle present in all mammalian cells studied and composed of a single polypeptide and one of four small RNA molecules. At least two isoforms are present in nucleated and red blood cells, and tissue specific differences in RO/SSA proteins have been identified. The common feature of these proteins is their ability to bind HY RNAs.2. Involved in the regulation of innate immunity and the inflammatory response in response to IFNG/IFN-gamma. Organizes autophagic machinery by serving as a platform for the assembly of ULK1, Beclin 1/BECN1 and ATG8 family members and recognizes specific autophagy targets, thus coordinating target recognition with assembly of the autophagic apparatus and initiation of autophagy. Also regulates autophagy through FIP200/RB1CC1 ubiquitination and subsequent decreased protein stability. Represses the innate antiviral response by facilitating the formation of the NMI-IFI35 complex through 'Lys-63'-linked ubiquitination of NMI. During viral infection, promotes cell pyroptosis by mediating 'Lys-6'-linked ubiquitination of ISG12a/IFI27, facilitating its translocation into the mitochondria and subsequent CASP3 activation. When up-regulated through the IFN/JAK/STAT signaling pathway, promotes 'Lys-27'-linked ubiquitination of MAVS, leading to the recruitment of TBK1 and up-regulation of innate immunity. Mediates 'Lys-63'-linked polyubiquitination of G3BP1 in response to heat shock, leading to stress granule disassembly. The polypeptide is E3 ubiquitin-protein ligase TRIM21 (Homo sapiens (Human)).